A 192-amino-acid polypeptide reads, in one-letter code: UPF0312 protein ECA1782 (192 aa).

A signal peptide spans 1-23; sequence MLKKTLLSLTAVSMLASAGSALA.

It belongs to the UPF0312 family. Type 1 subfamily.

The protein resides in the periplasm. In Pectobacterium atrosepticum (strain SCRI 1043 / ATCC BAA-672) (Erwinia carotovora subsp. atroseptica), this protein is UPF0312 protein ECA1782.